The primary structure comprises 455 residues: EP1-like glycoprotein 1 (455 aa).

Positions Met1–Ala22 are cleaved as a signal peptide. Positions Thr43–Asp163 constitute a Bulb-type lectin domain. 5 N-linked (GlcNAc...) asparagine glycosylation sites follow: Asn106, Asn191, Asn211, Asn241, and Asn289. The residue at position 374 (Cys374) is an S-nitrosocysteine. The 82-residue stretch at Cys374–Tyr455 folds into the PAN domain. 2 cysteine pairs are disulfide-bonded: Cys410–Cys432 and Cys414–Cys420. A glycan (N-linked (GlcNAc...) asparagine) is linked at Asn446.

Its subcellular location is the secreted. The protein localises to the cell wall. The chain is EP1-like glycoprotein 1 from Arabidopsis thaliana (Mouse-ear cress).